Consider the following 208-residue polypeptide: Protein-L-isoaspartate O-methyltransferase (208 aa).

The active site involves Ser59.

Belongs to the methyltransferase superfamily. L-isoaspartyl/D-aspartyl protein methyltransferase family.

It localises to the cytoplasm. The enzyme catalyses [protein]-L-isoaspartate + S-adenosyl-L-methionine = [protein]-L-isoaspartate alpha-methyl ester + S-adenosyl-L-homocysteine. Catalyzes the methyl esterification of L-isoaspartyl residues in peptides and proteins that result from spontaneous decomposition of normal L-aspartyl and L-asparaginyl residues. It plays a role in the repair and/or degradation of damaged proteins. The sequence is that of Protein-L-isoaspartate O-methyltransferase from Shigella sonnei (strain Ss046).